Consider the following 173-residue polypeptide: MTIILGIDPGSRVTGYGLIRQQGRQLTYVASGCIRTVVDDMPTRLKLIYAGVSEIITQFKPDFFAIEQVFMAKNPDSALKLGQARGVAIVAAVNQDLEVFEYAARQVKQTVVGTGAAEKAQVQHMVRSLLKLSANPQADAADALAIAITHCHLSQNVLRMSEGRLNLARGRLK.

Catalysis depends on residues aspartate 8, glutamate 67, and aspartate 139. Mg(2+) is bound by residues aspartate 8, glutamate 67, and aspartate 139.

Belongs to the RuvC family. In terms of assembly, homodimer which binds Holliday junction (HJ) DNA. The HJ becomes 2-fold symmetrical on binding to RuvC with unstacked arms; it has a different conformation from HJ DNA in complex with RuvA. In the full resolvosome a probable DNA-RuvA(4)-RuvB(12)-RuvC(2) complex forms which resolves the HJ. It depends on Mg(2+) as a cofactor.

The protein resides in the cytoplasm. It catalyses the reaction Endonucleolytic cleavage at a junction such as a reciprocal single-stranded crossover between two homologous DNA duplexes (Holliday junction).. In terms of biological role, the RuvA-RuvB-RuvC complex processes Holliday junction (HJ) DNA during genetic recombination and DNA repair. Endonuclease that resolves HJ intermediates. Cleaves cruciform DNA by making single-stranded nicks across the HJ at symmetrical positions within the homologous arms, yielding a 5'-phosphate and a 3'-hydroxyl group; requires a central core of homology in the junction. The consensus cleavage sequence is 5'-(A/T)TT(C/G)-3'. Cleavage occurs on the 3'-side of the TT dinucleotide at the point of strand exchange. HJ branch migration catalyzed by RuvA-RuvB allows RuvC to scan DNA until it finds its consensus sequence, where it cleaves and resolves the cruciform DNA. This Serratia proteamaculans (strain 568) protein is Crossover junction endodeoxyribonuclease RuvC.